Here is an 827-residue protein sequence, read N- to C-terminus: Glycerol-3-phosphate acyltransferase (827 aa).

Positions 325–330 match the HXXXXD motif motif; that stretch reads CHRSHM.

The protein belongs to the GPAT/DAPAT family.

It localises to the cell inner membrane. The catalysed reaction is sn-glycerol 3-phosphate + an acyl-CoA = a 1-acyl-sn-glycero-3-phosphate + CoA. Its pathway is phospholipid metabolism; CDP-diacylglycerol biosynthesis; CDP-diacylglycerol from sn-glycerol 3-phosphate: step 1/3. The polypeptide is Glycerol-3-phosphate acyltransferase (Shigella boydii serotype 4 (strain Sb227)).